A 684-amino-acid polypeptide reads, in one-letter code: Zinc finger BED domain-containing protein RICESLEEPER 4 (684 aa).

The segment at 54-113 (KRKSAIWEHFTLVDVSDGCKRASCIHCNQSLAYSSGSKNSGTSHLTRHIAEWCRVLKDRQ) adopts a BED-type zinc-finger fold. Residues cysteine 77, cysteine 80, histidine 101, and cysteine 106 each contribute to the Zn(2+) site. The tract at residues 595-680 (ELELYLEEAL…EALLCAKDWL (86 aa)) is HATC (Hobo-Ac-Tam3) domain.

In terms of assembly, homodimer.

It localises to the nucleus. Its function is as follows. Transposase-like protein that is essential for plant growth and development. May regulate global gene expression by recruiting other cellular factors. The polypeptide is Zinc finger BED domain-containing protein RICESLEEPER 4 (Oryza sativa subsp. japonica (Rice)).